Reading from the N-terminus, the 661-residue chain is UvrABC system protein B (661 aa).

In terms of domain architecture, Helicase ATP-binding spans 28-414 (KGVKEGKRHQ…HTDEMIEQII (387 aa)). 41-48 (GATGTGKT) serves as a coordination point for ATP. Positions 94 to 117 (YYDYYQPEAYVPSTDTFIEKDASI) match the Beta-hairpin motif. The region spanning 432 to 598 (QIDDLLSEIQ…TINKKIHDVI (167 aa)) is the Helicase C-terminal domain. Positions 604-625 (NDETNEKQQTELPKKMTKKERQ) are disordered. Residues 607 to 617 (TNEKQQTELPK) are compositionally biased toward basic and acidic residues. Residues 625–660 (QKTIENIEKEMKKAAKDLDFEKATELRDMLFELKSE) form the UVR domain.

Belongs to the UvrB family. In terms of assembly, forms a heterotetramer with UvrA during the search for lesions. Interacts with UvrC in an incision complex.

It is found in the cytoplasm. In terms of biological role, the UvrABC repair system catalyzes the recognition and processing of DNA lesions. A damage recognition complex composed of 2 UvrA and 2 UvrB subunits scans DNA for abnormalities. Upon binding of the UvrA(2)B(2) complex to a putative damaged site, the DNA wraps around one UvrB monomer. DNA wrap is dependent on ATP binding by UvrB and probably causes local melting of the DNA helix, facilitating insertion of UvrB beta-hairpin between the DNA strands. Then UvrB probes one DNA strand for the presence of a lesion. If a lesion is found the UvrA subunits dissociate and the UvrB-DNA preincision complex is formed. This complex is subsequently bound by UvrC and the second UvrB is released. If no lesion is found, the DNA wraps around the other UvrB subunit that will check the other stand for damage. The protein is UvrABC system protein B of Staphylococcus haemolyticus (strain JCSC1435).